We begin with the raw amino-acid sequence, 250 residues long: MSKLRVAVLGVKGRIGSEAVRAVEAAEDMELVAALGRGDKLETLADTGAQVAVELTTPASVMGNLDFCVRHGIHAVVGTTGWTDDRLAQLKGWLAQSPETGVLIAPNFSIGAVLTMKFAQLAAPYFESVEVVELHHPNKVDAPSGTATRTAQLIAEARRKAGSAPQPDATVTALDGARGANVDGVPVHAVRLRGLLAHQEVLLGAEGETLTVRHDSLHHSSFMPGILLGARRVVTTPGLTFGLEHFLDLN.

NAD(+)-binding positions include G10 to I15, G78 to T80, and A105 to F108. H135 acts as the Proton donor/acceptor in catalysis. H136 contributes to the (S)-2,3,4,5-tetrahydrodipicolinate binding site. The active-site Proton donor is K139. (S)-2,3,4,5-tetrahydrodipicolinate is bound at residue G145–T146.

The protein belongs to the DapB family.

The protein localises to the cytoplasm. The enzyme catalyses (S)-2,3,4,5-tetrahydrodipicolinate + NAD(+) + H2O = (2S,4S)-4-hydroxy-2,3,4,5-tetrahydrodipicolinate + NADH + H(+). It catalyses the reaction (S)-2,3,4,5-tetrahydrodipicolinate + NADP(+) + H2O = (2S,4S)-4-hydroxy-2,3,4,5-tetrahydrodipicolinate + NADPH + H(+). It functions in the pathway amino-acid biosynthesis; L-lysine biosynthesis via DAP pathway; (S)-tetrahydrodipicolinate from L-aspartate: step 4/4. In terms of biological role, catalyzes the conversion of 4-hydroxy-tetrahydrodipicolinate (HTPA) to tetrahydrodipicolinate. This chain is 4-hydroxy-tetrahydrodipicolinate reductase, found in Streptomyces avermitilis (strain ATCC 31267 / DSM 46492 / JCM 5070 / NBRC 14893 / NCIMB 12804 / NRRL 8165 / MA-4680).